A 142-amino-acid chain; its full sequence is Translation initiation factor 2 subunit beta (142 aa).

The protein belongs to the eIF-2-beta/eIF-5 family. Heterotrimer composed of an alpha, a beta and a gamma chain.

In terms of biological role, eIF-2 functions in the early steps of protein synthesis by forming a ternary complex with GTP and initiator tRNA. This chain is Translation initiation factor 2 subunit beta, found in Thermococcus kodakarensis (strain ATCC BAA-918 / JCM 12380 / KOD1) (Pyrococcus kodakaraensis (strain KOD1)).